A 236-amino-acid polypeptide reads, in one-letter code: MEKREQLYAGKAKSIFNTDDPDHLVMLFRNDTSAFDGKRVEQLDRKGMVNNKFNAFIMGKLQAAGIPTHFVKLLSDTEALVKKMDMIPVECVVRNLAAGSLVRRLGVQEGQVLNPPTFELFLKNDALGDPMINESHVESFGWATREQLARMKELTFKINEVLKDLFAAGNMLLVDFKVEFGLHKGEVILGDEFSPDGCRLWDKDTREKLDKDRFRQNLGNVVESYELVGQRLGLTF.

The protein belongs to the SAICAR synthetase family.

The enzyme catalyses 5-amino-1-(5-phospho-D-ribosyl)imidazole-4-carboxylate + L-aspartate + ATP = (2S)-2-[5-amino-1-(5-phospho-beta-D-ribosyl)imidazole-4-carboxamido]succinate + ADP + phosphate + 2 H(+). It participates in purine metabolism; IMP biosynthesis via de novo pathway; 5-amino-1-(5-phospho-D-ribosyl)imidazole-4-carboxamide from 5-amino-1-(5-phospho-D-ribosyl)imidazole-4-carboxylate: step 1/2. The sequence is that of Phosphoribosylaminoimidazole-succinocarboxamide synthase from Cellvibrio japonicus (strain Ueda107) (Pseudomonas fluorescens subsp. cellulosa).